A 330-amino-acid chain; its full sequence is 4-hydroxythreonine-4-phosphate dehydrogenase (330 aa).

Positions 133 and 134 each coordinate substrate. Residues His-163, His-208, and His-263 each coordinate a divalent metal cation. 3 residues coordinate substrate: Lys-271, Asn-280, and Arg-289.

It belongs to the PdxA family. Homodimer. Zn(2+) serves as cofactor. Mg(2+) is required as a cofactor. It depends on Co(2+) as a cofactor.

It localises to the cytoplasm. It carries out the reaction 4-(phosphooxy)-L-threonine + NAD(+) = 3-amino-2-oxopropyl phosphate + CO2 + NADH. Its pathway is cofactor biosynthesis; pyridoxine 5'-phosphate biosynthesis; pyridoxine 5'-phosphate from D-erythrose 4-phosphate: step 4/5. Catalyzes the NAD(P)-dependent oxidation of 4-(phosphooxy)-L-threonine (HTP) into 2-amino-3-oxo-4-(phosphooxy)butyric acid which spontaneously decarboxylates to form 3-amino-2-oxopropyl phosphate (AHAP). This chain is 4-hydroxythreonine-4-phosphate dehydrogenase, found in Azoarcus sp. (strain BH72).